The sequence spans 704 residues: ATPase synthesis protein 25, mitochondrial (704 aa).

The N-terminal 59 residues, 1-59 (MSGIALQGIRCHACRNAAFRSFAAISGLSSSIRRPQSSISYPGSKLYQRNVRTTGRRQF), are a transit peptide targeting the mitochondrion. Polar residues predominate over residues 57–72 (RQFSTLGSVKSQVDSD). Residues 57–118 (RQFSTLGSVK…QELPPLPENP (62 aa)) are disordered. The span at 73-83 (LPTKTETKEDA) shows a compositional bias: basic and acidic residues.

This sequence belongs to the ATP25 family.

The protein resides in the mitochondrion inner membrane. In terms of biological role, probable mitochondrial mRNA stabilization factor. The chain is ATPase synthesis protein 25, mitochondrial (ATP25) from Arthroderma benhamiae (strain ATCC MYA-4681 / CBS 112371) (Trichophyton mentagrophytes).